Consider the following 444-residue polypeptide: MKATEVIEKLKAKFPGQPEYIQAVSQVLGTIEEEYNKHPEFEKANLIERLCVPDRILQFRVSWVDDNGNVQTNLGYRVQHNNAIGPYKGGLRFHKSVNASILKFLAFEQTFKNSLTTLPMGGAKGGSDFDPHGKSDMEVMRFCQAFMNELYRLIGPDEDVPAGDIGVGGREVGYMFGQYKKLTHQFQGILTGKGLEFGGSLIRPEATGYGNVYFLEDMLKTRGESLEGKTVLVSGSGNVAQYTIEKLLQLGAKPVTCSDSNGYIYDPDGIDAEKLAFIMELKNVKRGRIKEYAEKYGVKYVENARPWGEKADIATPCATQDEINEAEAKTLIANGVFAVSEGANMPTEPAAIKVFQDAKILYCPGKASNAGGVATSGLEMSQNSERLSWTREEVDTKLHNIMDEIHANCVKYGTEPDGYINYVKGANVAGFMKVAKAMMAQGIY.

Residues Lys88, Gln109, and Lys112 each coordinate substrate. Lys124 (proton donor) is an active-site residue. Substrate is bound at residue Gly163. Thr207 and Asn238 together coordinate NADP(+). Ser376 is a binding site for substrate.

This sequence belongs to the Glu/Leu/Phe/Val dehydrogenases family. As to quaternary structure, homohexamer.

It catalyses the reaction L-glutamate + NAD(+) + H2O = 2-oxoglutarate + NH4(+) + NADH + H(+). The catalysed reaction is L-glutamate + NADP(+) + H2O = 2-oxoglutarate + NH4(+) + NADPH + H(+). In terms of biological role, catalyzes the reversible oxidative deamination of glutamate to alpha-ketoglutarate and ammonia. P.ruminicola possess both NADP(H)- and NAD(H)-dependent activities on the same enzyme, suggesting that both anabolic and catabolic forms of the enzyme might occur. This Xylanibacter ruminicola (Prevotella ruminicola) protein is NAD(P)-specific glutamate dehydrogenase (gdhA).